The chain runs to 109 residues: Major allergen I polypeptide chain 2 (109 aa).

A signal peptide spans 1 to 17 (MRGALLVLALLVTQALG). A glycan (N-linked (GlcNAc...) asparagine) is linked at N50.

The protein belongs to the secretoglobin family. In terms of assembly, heterotetramer composed of two non-covalently linked disulfide-linked heterodimer of chains 1 and 2. The long form is preferentially expressed in the salivary gland, while the short form is preferentially expressed in the skin.

It is found in the secreted. The chain is Major allergen I polypeptide chain 2 (CH2) from Felis catus (Cat).